The chain runs to 242 residues: Protein Thf1 (242 aa).

Residues 178–209 (SSDKLQKDLDLYRSNLDKMQQLLTVIEDTLEA) adopt a coiled-coil conformation. The segment at 212–242 (KKRASQKLEKKPEVVEEKEHKENEEQQQSSN) is disordered. The span at 217-235 (QKLEKKPEVVEEKEHKENE) shows a compositional bias: basic and acidic residues.

Belongs to the THF1 family.

May be involved in photosynthetic membrane biogenesis. The chain is Protein Thf1 from Crocosphaera subtropica (strain ATCC 51142 / BH68) (Cyanothece sp. (strain ATCC 51142)).